Here is a 189-residue protein sequence, read N- to C-terminus: Potassium-transporting ATPase KdpC subunit (189 aa).

The chain crosses the membrane as a helical span at residues 6 to 26 (PAILLFIMFTIICGGIYPALV).

This sequence belongs to the KdpC family. The system is composed of three essential subunits: KdpA, KdpB and KdpC.

Its subcellular location is the cell inner membrane. Part of the high-affinity ATP-driven potassium transport (or Kdp) system, which catalyzes the hydrolysis of ATP coupled with the electrogenic transport of potassium into the cytoplasm. This subunit acts as a catalytic chaperone that increases the ATP-binding affinity of the ATP-hydrolyzing subunit KdpB by the formation of a transient KdpB/KdpC/ATP ternary complex. The polypeptide is Potassium-transporting ATPase KdpC subunit (Trichlorobacter lovleyi (strain ATCC BAA-1151 / DSM 17278 / SZ) (Geobacter lovleyi)).